Here is a 505-residue protein sequence, read N- to C-terminus: Alpha-ketoglutarate-dependent dioxygenase FTO (505 aa).

Residue Thr4 is modified to Phosphothreonine. Positions 32 to 327 (TPKDDEFYQQ…SSTHRVAECS (296 aa)) are fe2OG dioxygenase domain. Residues Arg96 and Tyr108 each coordinate substrate. Residue Asn205 coordinates 2-oxoglutarate. Residues 213–224 (PYLKEEPYFGMG) form a loop L1; predicted to block binding of double-stranded DNA or RNA region. Residue Lys216 is modified to N6-acetyllysine. Fe cation-binding residues include His231 and Asp233. 231–234 (HHDE) serves as a coordination point for substrate. Tyr295 contacts 2-oxoglutarate. His307 is a Fe cation binding site. 2-oxoglutarate is bound by residues 316–318 (RFS), Thr320, and Arg322.

Belongs to the fto family. In terms of assembly, monomer. May also exist as homodimer. Fe(2+) serves as cofactor.

Its subcellular location is the nucleus. It is found in the nucleus speckle. The protein localises to the cytoplasm. The enzyme catalyses a 5'-end (N(7)-methyl 5'-triphosphoguanosine)-(N(6),2'-O-dimethyladenosine) in mRNA + 2-oxoglutarate + O2 = a 5'-end (N(7)-methyl 5'-triphosphoguanosine)-(2'-O-methyladenosine) in mRNA + formaldehyde + succinate + CO2. It carries out the reaction an N(6)-methyladenosine in mRNA + 2-oxoglutarate + O2 = an adenosine in mRNA + formaldehyde + succinate + CO2. The catalysed reaction is N(6)-methyladenosine in U6 snRNA + 2-oxoglutarate + O2 = adenosine in U6 snRNA + formaldehyde + succinate + CO2. It catalyses the reaction a 5'-end (N(7)-methyl 5'-triphosphoguanosine)-(N(6),2'-O-dimethyladenosine) in U6 snRNA + 2-oxoglutarate + O2 = a 5'-end (N(7)-methyl 5'-triphosphoguanosine)-(2'-O-methyladenosine) in U6 snRNA + formaldehyde + succinate + CO2. The enzyme catalyses an N(1)-methyladenosine in tRNA + 2-oxoglutarate + O2 = an adenosine in tRNA + formaldehyde + succinate + CO2. Activated by ascorbate. Inhibited by N-oxalylglycine, fumarate and succinate. RNA demethylase that mediates oxidative demethylation of different RNA species, such as mRNAs, tRNAs and snRNAs, and acts as a regulator of fat mass, adipogenesis and energy homeostasis. Specifically demethylates N(6)-methyladenosine (m6A) RNA, the most prevalent internal modification of messenger RNA (mRNA) in higher eukaryotes. M6A demethylation by FTO affects mRNA expression and stability. Also able to demethylate m6A in U6 small nuclear RNA (snRNA). Mediates demethylation of N(6),2'-O-dimethyladenosine cap (m6A(m)), by demethylating the N(6)-methyladenosine at the second transcribed position of mRNAs and U6 snRNA. Demethylation of m6A(m) in the 5'-cap by FTO affects mRNA stability by promoting susceptibility to decapping. Also acts as a tRNA demethylase by removing N(1)-methyladenine from various tRNAs. Has no activity towards 1-methylguanine. Has no detectable activity towards double-stranded DNA. Also able to repair alkylated DNA and RNA by oxidative demethylation: demethylates single-stranded RNA containing 3-methyluracil, single-stranded DNA containing 3-methylthymine and has low demethylase activity towards single-stranded DNA containing 1-methyladenine or 3-methylcytosine. Ability to repair alkylated DNA and RNA is however unsure in vivo. Involved in the regulation of fat mass, adipogenesis and body weight, thereby contributing to the regulation of body size and body fat accumulation. Involved in the regulation of thermogenesis and the control of adipocyte differentiation into brown or white fat cells. Regulates activity of the dopaminergic midbrain circuitry via its ability to demethylate m6A in mRNAs. The protein is Alpha-ketoglutarate-dependent dioxygenase FTO of Pongo abelii (Sumatran orangutan).